The sequence spans 183 residues: GTP cyclohydrolase 1 (183 aa).

Zn(2+) contacts are provided by Cys71, His74, and Cys142.

The protein belongs to the GTP cyclohydrolase I family. As to quaternary structure, toroid-shaped homodecamer, composed of two pentamers of five dimers.

The enzyme catalyses GTP + H2O = 7,8-dihydroneopterin 3'-triphosphate + formate + H(+). The protein operates within cofactor biosynthesis; 7,8-dihydroneopterin triphosphate biosynthesis; 7,8-dihydroneopterin triphosphate from GTP: step 1/1. This chain is GTP cyclohydrolase 1, found in Leptospira borgpetersenii serovar Hardjo-bovis (strain JB197).